The sequence spans 309 residues: tRNA pseudouridine synthase B (309 aa).

Asp-40 acts as the Nucleophile in catalysis.

Belongs to the pseudouridine synthase TruB family. Type 1 subfamily.

The catalysed reaction is uridine(55) in tRNA = pseudouridine(55) in tRNA. Functionally, responsible for synthesis of pseudouridine from uracil-55 in the psi GC loop of transfer RNAs. This is tRNA pseudouridine synthase B from Mycobacterium avium (strain 104).